A 92-amino-acid chain; its full sequence is C-C motif chemokine 4 (92 aa).

A signal peptide spans 1 to 23; sequence MKLCVTVLSLLVLMAAFCSPALS. 2 disulfides stabilise this stretch: Cys-34-Cys-58 and Cys-35-Cys-74.

This sequence belongs to the intercrine beta (chemokine CC) family. As to quaternary structure, homodimer. Interacts with CCR5.

Its subcellular location is the secreted. Functionally, monokine with inflammatory and chemokinetic properties. The chain is C-C motif chemokine 4 (CCL4) from Bos taurus (Bovine).